The sequence spans 760 residues: Catalase-peroxidase (760 aa).

Positions 1-24 are disordered; the sequence is MAESKCPFKSQGSRSNVAGGGTRN. A cross-link (tryptophyl-tyrosyl-methioninium (Trp-Tyr) (with M-268)) is located at residues 96–242; that stretch reads WHSAGTYRVF…LAAAHMGLIY (147 aa). His97 serves as the catalytic Proton acceptor. The segment at residues 242-268 is a cross-link (tryptophyl-tyrosyl-methioninium (Tyr-Met) (with W-96)); the sequence is YVNPEGPDGNPDPVAAAHDIRVTFGRM. Residue His283 coordinates heme b.

It belongs to the peroxidase family. Peroxidase/catalase subfamily. In terms of assembly, homodimer or homotetramer. Heme b serves as cofactor. Formation of the three residue Trp-Tyr-Met cross-link is important for the catalase, but not the peroxidase activity of the enzyme.

It is found in the cytoplasm. The catalysed reaction is H2O2 + AH2 = A + 2 H2O. The enzyme catalyses 2 H2O2 = O2 + 2 H2O. Functionally, bifunctional enzyme with both catalase and broad-spectrum peroxidase activity. The sequence is that of Catalase-peroxidase from Aspergillus clavatus (strain ATCC 1007 / CBS 513.65 / DSM 816 / NCTC 3887 / NRRL 1 / QM 1276 / 107).